Reading from the N-terminus, the 187-residue chain is Dirigent protein 6 (187 aa).

Positions 1–29 (MAFLVEKQLFKALFSFFLLVLLFSDTVLS) are cleaved as a signal peptide. Cys-40 and Cys-186 form a disulfide bridge. N-linked (GlcNAc...) asparagine glycosylation is found at Asn-59 and Asn-123.

The protein belongs to the plant dirigent protein family. In terms of assembly, homodimer. As to expression, expressed in roots, cotyledon veins, leaf trichomes, flowers, siliques, and meristems. Present in interfascicular/vascular cambia and developing xylem.

Its subcellular location is the secreted. It is found in the extracellular space. The protein resides in the apoplast. Functionally, dirigent proteins impart stereoselectivity on the phenoxy radical-coupling reaction, yielding optically active lignans from two molecules of coniferyl alcohol in the biosynthesis of lignans, flavonolignans, and alkaloids and thus plays a central role in plant secondary metabolism. Enantiocomplementary dirigent protein that mediates the laccase-catalyzed enantioselective oxidative phenol coupling of (E)-coniferyl alcohol to (-)-pinoresinol. This is Dirigent protein 6 (DIR6) from Arabidopsis thaliana (Mouse-ear cress).